The sequence spans 136 residues: MTERTLVLIKPDGVQRRLVGEILGRIERKGLTLAALELKTVDDELARRHYAEHEGKPFFGSLLEFITSGPVVAAIVEGPRAIAAFRQIAGGTDPVEKATPGTIRADLALVTQDNLVHGSDSPESAAREIDLWFPGR.

ATP is bound by residues K10, F58, R86, T92, R104, and N114. H117 (pros-phosphohistidine intermediate) is an active-site residue.

This sequence belongs to the NDK family. Homotetramer. It depends on Mg(2+) as a cofactor.

It localises to the cytoplasm. The catalysed reaction is a 2'-deoxyribonucleoside 5'-diphosphate + ATP = a 2'-deoxyribonucleoside 5'-triphosphate + ADP. The enzyme catalyses a ribonucleoside 5'-diphosphate + ATP = a ribonucleoside 5'-triphosphate + ADP. Functionally, major role in the synthesis of nucleoside triphosphates other than ATP. The ATP gamma phosphate is transferred to the NDP beta phosphate via a ping-pong mechanism, using a phosphorylated active-site intermediate. The polypeptide is Nucleoside diphosphate kinase (Mycobacterium sp. (strain MCS)).